Reading from the N-terminus, the 62-residue chain is Keratin-associated protein 6-2 (62 aa).

The protein belongs to the KRTAP type 6 family. Interacts with hair keratins.

Its function is as follows. In the hair cortex, hair keratin intermediate filaments are embedded in an interfilamentous matrix, consisting of hair keratin-associated proteins (KRTAP), which are essential for the formation of a rigid and resistant hair shaft through their extensive disulfide bond cross-linking with abundant cysteine residues of hair keratins. The matrix proteins include the high-sulfur and high-glycine-tyrosine keratins. The polypeptide is Keratin-associated protein 6-2 (KRTAP6-2) (Homo sapiens (Human)).